A 241-amino-acid polypeptide reads, in one-letter code: 7-cyano-7-deazaguanine synthase (241 aa).

An ATP-binding site is contributed by 15-25; sequence FSGGQDSTTTL. Cysteine 203, cysteine 218, cysteine 221, and cysteine 224 together coordinate Zn(2+).

It belongs to the QueC family. The cofactor is Zn(2+).

It carries out the reaction 7-carboxy-7-deazaguanine + NH4(+) + ATP = 7-cyano-7-deazaguanine + ADP + phosphate + H2O + H(+). The protein operates within purine metabolism; 7-cyano-7-deazaguanine biosynthesis. In terms of biological role, catalyzes the ATP-dependent conversion of 7-carboxy-7-deazaguanine (CDG) to 7-cyano-7-deazaguanine (preQ(0)). This is 7-cyano-7-deazaguanine synthase from Azorhizobium caulinodans (strain ATCC 43989 / DSM 5975 / JCM 20966 / LMG 6465 / NBRC 14845 / NCIMB 13405 / ORS 571).